The sequence spans 634 residues: (-)-limonene synthase, chloroplastic (634 aa).

A chloroplast-targeting transit peptide spans 1 to 21 (MSPVSAIPLAYKLCLPRSLIS). (2E)-geranyl diphosphate-binding residues include arginine 348, aspartate 385, aspartate 389, arginine 526, and glycine 529. Residues aspartate 385 and aspartate 389 each coordinate Mg(2+). The DDXXD motif signature appears at 385–389 (DDIYD). The Mg(2+) site is built by glycine 529 and aspartate 537.

It belongs to the terpene synthase family. Tpsb subfamily. In terms of assembly, monomer. The cofactor is Mg(2+). Mn(2+) serves as cofactor.

Its subcellular location is the plastid. The protein localises to the chloroplast. The catalysed reaction is (2E)-geranyl diphosphate = (4S)-limonene + diphosphate. The protein operates within secondary metabolite biosynthesis; terpenoid biosynthesis. It functions in the pathway terpene metabolism; oleoresin biosynthesis. Monoterpene synthase (mono-TPS) involved in the biosynthesis of monoterpene natural products. Catalyzes the conversion of (2E)-geranyl diphosphate (GPP) into (-)-limonene. Not able to use geranylgeranyl pyrophosphate (GGPP) and farnesyl pyrophosphate (FPP) as substrates. The sequence is that of (-)-limonene synthase, chloroplastic from Picea sitchensis (Sitka spruce).